Reading from the N-terminus, the 235-residue chain is Hydroxyacylglutathione hydrolase (235 aa).

Positions 53, 55, 57, 58, 109, 127, and 165 each coordinate Zn(2+).

The protein belongs to the metallo-beta-lactamase superfamily. Glyoxalase II family. As to quaternary structure, monomer. Zn(2+) serves as cofactor.

The enzyme catalyses an S-(2-hydroxyacyl)glutathione + H2O = a 2-hydroxy carboxylate + glutathione + H(+). It participates in secondary metabolite metabolism; methylglyoxal degradation; (R)-lactate from methylglyoxal: step 2/2. Its function is as follows. Thiolesterase that catalyzes the hydrolysis of S-D-lactoyl-glutathione to form glutathione and D-lactic acid. This is Hydroxyacylglutathione hydrolase from Actinobacillus pleuropneumoniae serotype 5b (strain L20).